Consider the following 529-residue polypeptide: Bifunctional purine biosynthesis protein PurH (529 aa).

Positions 1-148 (MQQRRPVRRA…KNHKDVAIVV (148 aa)) constitute an MGS-like domain.

This sequence belongs to the PurH family.

It carries out the reaction (6R)-10-formyltetrahydrofolate + 5-amino-1-(5-phospho-beta-D-ribosyl)imidazole-4-carboxamide = 5-formamido-1-(5-phospho-D-ribosyl)imidazole-4-carboxamide + (6S)-5,6,7,8-tetrahydrofolate. The enzyme catalyses IMP + H2O = 5-formamido-1-(5-phospho-D-ribosyl)imidazole-4-carboxamide. It participates in purine metabolism; IMP biosynthesis via de novo pathway; 5-formamido-1-(5-phospho-D-ribosyl)imidazole-4-carboxamide from 5-amino-1-(5-phospho-D-ribosyl)imidazole-4-carboxamide (10-formyl THF route): step 1/1. The protein operates within purine metabolism; IMP biosynthesis via de novo pathway; IMP from 5-formamido-1-(5-phospho-D-ribosyl)imidazole-4-carboxamide: step 1/1. The polypeptide is Bifunctional purine biosynthesis protein PurH (Salmonella typhi).